The primary structure comprises 89 residues: Myrmicitoxin(1)-Pr2c (89 aa).

Positions 1–23 (MEIPKLLYIAVIAIGLSGSLTCA) are cleaved as a signal peptide. Positions 24–61 (TPLANPWADPEAEANPKAKATAEATAEAIAEALAEPEP) are excised as a propeptide. N88 bears the Asparagine amide mark.

The protein belongs to the formicidae venom clade 1 family. As to expression, expressed by the venom gland.

The protein localises to the secreted. Its function is as follows. Vertebrate-selective toxin that causes pain by targeting voltage-gated sodium channels. This Pogonomyrmex rugosus (Desert harvester ant) protein is Myrmicitoxin(1)-Pr2c.